Reading from the N-terminus, the 299-residue chain is Protease HtpX homolog (299 aa).

2 consecutive transmembrane segments (helical) span residues 14–34 (WLLL…VGYL) and 39–59 (GFGG…TMIF). His-143 contacts Zn(2+). Residue Glu-144 is part of the active site. A Zn(2+)-binding site is contributed by His-147. 2 helical membrane passes run 153–173 (IRIS…AVMA) and 198–218 (IILL…ATLV). Glu-227 serves as a coordination point for Zn(2+).

This sequence belongs to the peptidase M48B family. Zn(2+) is required as a cofactor.

It localises to the cell membrane. In Streptococcus thermophilus (strain CNRZ 1066), this protein is Protease HtpX homolog.